Here is a 236-residue protein sequence, read N- to C-terminus: tRNA (guanine-N(7)-)-methyltransferase (236 aa).

Residues 1–23 are disordered; that stretch reads MEADVQRAQQAQLEKGSSVPPWT. S-adenosyl-L-methionine is bound by residues aspartate 69, glutamate 94, asparagine 121, and aspartate 144. Residue aspartate 144 is part of the active site. Positions 148 and 180 each coordinate substrate.

This sequence belongs to the class I-like SAM-binding methyltransferase superfamily. TrmB family.

It catalyses the reaction guanosine(46) in tRNA + S-adenosyl-L-methionine = N(7)-methylguanosine(46) in tRNA + S-adenosyl-L-homocysteine. The protein operates within tRNA modification; N(7)-methylguanine-tRNA biosynthesis. Its function is as follows. Catalyzes the formation of N(7)-methylguanine at position 46 (m7G46) in tRNA. The chain is tRNA (guanine-N(7)-)-methyltransferase from Synechococcus sp. (strain JA-3-3Ab) (Cyanobacteria bacterium Yellowstone A-Prime).